Here is a 92-residue protein sequence, read N- to C-terminus: Large ribosomal subunit protein eL43 (92 aa).

Positions 39, 42, 57, and 60 each coordinate Zn(2+). The segment at 39 to 60 adopts a C4-type zinc-finger fold; the sequence is CSFCGKTKMKRRAVGIWHCGSC.

This sequence belongs to the eukaryotic ribosomal protein eL43 family. Component of the large ribosomal subunit.

Its subcellular location is the cytoplasm. In terms of biological role, component of the large ribosomal subunit. The ribosome is a large ribonucleoprotein complex responsible for the synthesis of proteins in the cell. The polypeptide is Large ribosomal subunit protein eL43 (Rpl37a) (Mus musculus (Mouse)).